The following is a 236-amino-acid chain: Syntaxin-8 (236 aa).

At Met1–Gly215 the chain is on the cytoplasmic side. The stretch at Val42–Ala65 forms a coiled coil. Residues Gln145 to Val207 enclose the t-SNARE coiled-coil homology domain. A Phosphoserine modification is found at Ser160. The chain crosses the membrane as a helical; Anchor for type IV membrane protein span at residues Met216 to Val232. The Vesicular portion of the chain corresponds to Trp233–Lys236.

Belongs to the syntaxin family. In terms of assembly, forms a SNARE complex with STX7, VTI1B and VAMP8 which functions in the homotypic fusion of late endosomes. Part of the SNARE core complex containing STX7, VAMP8 and VTI1B. Interacts with VAMP8. Interacts with HECTD3. Interacts with TPC1. In terms of processing, ubiquitinated by HECTD3.

The protein resides in the membrane. In terms of biological role, vesicle trafficking protein that functions in the early secretory pathway, possibly by mediating retrograde transport from cis-Golgi membranes to the ER. This Bos taurus (Bovine) protein is Syntaxin-8 (STX8).